The following is a 417-amino-acid chain: Inhibitor of growth protein 3 (417 aa).

2 disordered regions span residues 128 to 203 (TPSQ…YNTN) and 286 to 320 (QTLS…SSSS). Over residues 136 to 152 (HHAHSHTPVEKRKHNPS) the composition is skewed to basic residues. Basic and acidic residues predominate over residues 156–168 (GATDHVPEKKFKS). Composition is skewed to low complexity over residues 189-203 (NNNS…YNTN), 286-295 (QTLSSSSTDS), and 307-320 (SSSQ…SSSS). A PHD-type zinc finger spans residues 359 to 408 (PRYCICNQVSYGEMVGCDNQDCPIEWFHYGCVGLTEAPKGKWYCPQCTAA). Zn(2+) is bound by residues cysteine 362, cysteine 364, cysteine 375, cysteine 380, histidine 386, cysteine 389, cysteine 402, and cysteine 405.

The protein belongs to the ING family. In terms of assembly, interacts with H3K4me3 and to a lesser extent with H3K4me2. Component of the NuA4 histone acetyltransferase complex.

The protein localises to the nucleus. Functionally, component of the NuA4 histone acetyltransferase (HAT) complex which is involved in transcriptional activation of select genes principally by acetylation of nucleosomal histone H4 and H2A. This modification may both alter nucleosome - DNA interactions and promote interaction of the modified histones with other proteins which positively regulate transcription. NuA4 may also play a direct role in DNA repair when directly recruited to sites of DNA damage. The sequence is that of Inhibitor of growth protein 3 (ING3) from Gallus gallus (Chicken).